The sequence spans 179 residues: Large ribosomal subunit protein uL5 (179 aa).

Belongs to the universal ribosomal protein uL5 family. Part of the 50S ribosomal subunit; part of the 5S rRNA/L5/L18/L25 subcomplex. Contacts the 5S rRNA and the P site tRNA. Forms a bridge to the 30S subunit in the 70S ribosome.

Functionally, this is one of the proteins that bind and probably mediate the attachment of the 5S RNA into the large ribosomal subunit, where it forms part of the central protuberance. In the 70S ribosome it contacts protein S13 of the 30S subunit (bridge B1b), connecting the 2 subunits; this bridge is implicated in subunit movement. Contacts the P site tRNA; the 5S rRNA and some of its associated proteins might help stabilize positioning of ribosome-bound tRNAs. This Mannheimia succiniciproducens (strain KCTC 0769BP / MBEL55E) protein is Large ribosomal subunit protein uL5.